The chain runs to 342 residues: Cyclin-D3-1 (342 aa).

Over residues 322–334 the composition is skewed to polar residues; that stretch reads VGSPATNYESSAS. The tract at residues 322–342 is disordered; the sequence is VGSPATNYESSASSKRRRICR.

Belongs to the cyclin family. Cyclin D subfamily.

The protein is Cyclin-D3-1 (CYCD3-1) of Oryza sativa subsp. japonica (Rice).